A 32-amino-acid polypeptide reads, in one-letter code: Cytochrome b6-f complex subunit 7 (32 aa).

Residues 9 to 27 (AVLSSVLVLVGLAIGFLLL) form a helical membrane-spanning segment.

It belongs to the PetM family. The 4 large subunits of the cytochrome b6-f complex are cytochrome b6, subunit IV (17 kDa polypeptide, PetD), cytochrome f and the Rieske protein, while the 4 small subunits are PetG, PetL, PetM and PetN. The complex functions as a dimer.

Its subcellular location is the plastid. It is found in the chloroplast thylakoid membrane. In terms of biological role, component of the cytochrome b6-f complex, which mediates electron transfer between photosystem II (PSII) and photosystem I (PSI), cyclic electron flow around PSI, and state transitions. This Pyropia yezoensis (Susabi-nori) protein is Cytochrome b6-f complex subunit 7.